The primary structure comprises 24 residues: Brevinin-1Sa (24 aa).

The cysteines at positions 18 and 24 are disulfide-linked.

As to expression, expressed by the skin glands.

The protein resides in the secreted. Its function is as follows. Antibacterial activity against Gram-negative bacterium E.coli. This is Brevinin-1Sa from Lithobates sphenocephalus (Southern leopard frog).